Reading from the N-terminus, the 531-residue chain is MSQEILDQVRRRRTFAIISHPDAGKTTLTEKLLLFSGAIQSAGTVKGKKTGKFATSDWMDIEKQRGISVASSVMQFDYKDHTVNLLDTPGHQDFSEDTYRVLTAVDSALMVIDAAKGVEAQTIKLLNVCRLRDTPIVTFMNKYDREVRDSLELLDEVEDILQIRCAPVTWPIGMGKNFKGVYHILNDEIYLFEAGGERLPHEFGIIKGINNPELEQRFPLEIQQLRDEIELVQAASNEFNLDEFLAGELTPVFFGSAINNFGIQEILNSLIDWAPAPKPRDATMRMVGPDEPKFSGFIFKIQANMDPKHRDRIAFLRVCSGKFERGMKMKHLRINREIAASSVVTFMSHNRELAEEAYAGDIIGIPNHGNIQIGDSFSEGEQLAFTGIPFFAPELFRSVRIKNPLKIKQLQKGLQQLGEEGAVQVFKPMSGADLILGAVGVLQFEVVTSRLANEYGVEAVFDSASIWSARWVSCDDKKKLAEFEKANAGNLAIDAGGNLAYLAPNRVNLGLTQERWPDIVFHETREHSVKL.

In terms of domain architecture, tr-type G spans 10 to 278 (RRRRTFAIIS…SLIDWAPAPK (269 aa)). Residues 19–26 (SHPDAGKT), 87–91 (DTPGH), and 141–144 (NKYD) contribute to the GTP site.

Belongs to the TRAFAC class translation factor GTPase superfamily. Classic translation factor GTPase family. PrfC subfamily.

Its subcellular location is the cytoplasm. Increases the formation of ribosomal termination complexes and stimulates activities of RF-1 and RF-2. It binds guanine nucleotides and has strong preference for UGA stop codons. It may interact directly with the ribosome. The stimulation of RF-1 and RF-2 is significantly reduced by GTP and GDP, but not by GMP. The polypeptide is Peptide chain release factor 3 (Neisseria gonorrhoeae (strain NCCP11945)).